Consider the following 594-residue polypeptide: Probable translation initiation factor IF-2 (594 aa).

The 220-residue stretch at 5–224 (YRAPIVVVVG…LMAGLTQRLV (220 aa)) folds into the tr-type G domain. Residues 14–21 (GHVDVGKT) form a G1 region. Residue 14-21 (GHVDVGKT) coordinates GTP. Residues 39-43 (MITQH) form a G2 region. Residues 80–83 (DTPG) form a G3 region. GTP contacts are provided by residues 80 to 84 (DTPGH) and 134 to 137 (NKVD). The tract at residues 134-137 (NKVD) is G4. Residues 202–204 (SAV) are G5.

It belongs to the TRAFAC class translation factor GTPase superfamily. Classic translation factor GTPase family. IF-2 subfamily.

Functionally, function in general translation initiation by promoting the binding of the formylmethionine-tRNA to ribosomes. Seems to function along with eIF-2. The protein is Probable translation initiation factor IF-2 of Caldivirga maquilingensis (strain ATCC 700844 / DSM 13496 / JCM 10307 / IC-167).